Reading from the N-terminus, the 575-residue chain is Sulfite reductase [NADPH] hemoprotein beta-component (575 aa).

Residues C439, C445, C484, and C488 each coordinate [4Fe-4S] cluster. C488 provides a ligand contact to siroheme.

This sequence belongs to the nitrite and sulfite reductase 4Fe-4S domain family. In terms of assembly, alpha(8)-beta(8). The alpha component is a flavoprotein, the beta component is a hemoprotein. Requires siroheme as cofactor. It depends on [4Fe-4S] cluster as a cofactor.

It carries out the reaction hydrogen sulfide + 3 NADP(+) + 3 H2O = sulfite + 3 NADPH + 4 H(+). The protein operates within sulfur metabolism; hydrogen sulfide biosynthesis; hydrogen sulfide from sulfite (NADPH route): step 1/1. Its function is as follows. Component of the sulfite reductase complex that catalyzes the 6-electron reduction of sulfite to sulfide. This is one of several activities required for the biosynthesis of L-cysteine from sulfate. The chain is Sulfite reductase [NADPH] hemoprotein beta-component from Blochmanniella pennsylvanica (strain BPEN).